Reading from the N-terminus, the 81-residue chain is Exodeoxyribonuclease 7 small subunit (81 aa).

Positions 61-81 are disordered; that stretch reads MNDSDQEVAFETPQGGTGDAD.

It belongs to the XseB family. As to quaternary structure, heterooligomer composed of large and small subunits.

It localises to the cytoplasm. The catalysed reaction is Exonucleolytic cleavage in either 5'- to 3'- or 3'- to 5'-direction to yield nucleoside 5'-phosphates.. Its function is as follows. Bidirectionally degrades single-stranded DNA into large acid-insoluble oligonucleotides, which are then degraded further into small acid-soluble oligonucleotides. The chain is Exodeoxyribonuclease 7 small subunit from Levilactobacillus brevis (strain ATCC 367 / BCRC 12310 / CIP 105137 / JCM 1170 / LMG 11437 / NCIMB 947 / NCTC 947) (Lactobacillus brevis).